We begin with the raw amino-acid sequence, 1433 residues long: Probable ATP-dependent RNA helicase spindle-E (1433 aa).

The tract at residues 76–98 is disordered; that stretch reads NRTLDELDSDDEEENMQEQPSVR. A compositionally biased stretch (acidic residues) spans 81–91; it reads ELDSDDEEENM. In terms of domain architecture, Helicase ATP-binding spans 127 to 294; it reads MKAIRENPVV…FATSSAFPPV (168 aa). Residue 140-147 participates in ATP binding; that stretch reads GETGCGKT. The DEAH box signature appears at 240–243; that stretch reads DEVH. Residues 354-526 enclose the Helicase C-terminal domain; it reads QSLQSYEEAK…NSVLKAKELE (173 aa). One can recognise a Tudor domain in the interval 937–1000; the sequence is ASAVTKGLQL…RLMPHELKRD (64 aa).

Belongs to the DEAD box helicase family. DEAH subfamily.

It localises to the cytoplasm. The catalysed reaction is ATP + H2O = ADP + phosphate + H(+). Its function is as follows. Probable ATP-binding RNA helicase which plays a central role during spermatogenesis and oogenesis by repressing transposable elements and preventing their mobilization, which is essential for the germline integrity. Acts via the piRNA metabolic process, which mediates the repression of transposable elements during meiosis by forming complexes composed of piRNAs and Piwi and govern the methylation and subsequent repression of transposons. Involved in the repression of LTR retrotransposon copia. Also involved in telomere regulation by repressing specialized telomeric retroelements HeT-A, TAHRE, and TART; Drosophila telomeres being maintained by transposition of specialized telomeric retroelements. Involved in telomeric trans-silencing, a repression mechanism by which a transposon or a transgene inserted in subtelomeric heterochromatin has the capacity to repress in trans in the female germline, a homologous transposon, or transgene located in euchromatin. Involved in the repression of testis-expressed Stellate genes by the homologous Su(Ste) repeats. Required for anteroposterior and dorsoventral axis formation during oogenesis. This Drosophila virilis (Fruit fly) protein is Probable ATP-dependent RNA helicase spindle-E (spn-E).